A 138-amino-acid polypeptide reads, in one-letter code: Beta-lactamase HcpB (138 aa).

3 TPR repeats span residues M1–F28, G57–D94, and L97–D130. Disulfide bonds link C22/C30, C52/C60, C88/C96, and C124/C132.

The protein belongs to the hcp beta-lactamase family.

The catalysed reaction is a beta-lactam + H2O = a substituted beta-amino acid. Functionally, hydrolyzes 6-aminopenicillinic acid and 7-aminocephalosporanic acid (ACA) derivatives. In Helicobacter pylori (strain ATCC 700392 / 26695) (Campylobacter pylori), this protein is Beta-lactamase HcpB (hcpB).